Consider the following 151-residue polypeptide: Nucleoside diphosphate kinase (151 aa).

Residues K10, F58, R86, T92, R103, and N113 each contribute to the ATP site. The active-site Pros-phosphohistidine intermediate is H116.

It belongs to the NDK family. Homotetramer. Requires Mg(2+) as cofactor.

The protein localises to the cytoplasm. It catalyses the reaction dZDP + ATP = dZTP + ADP. It carries out the reaction a 2'-deoxyribonucleoside 5'-diphosphate + ATP = a 2'-deoxyribonucleoside 5'-triphosphate + ADP. The enzyme catalyses a ribonucleoside 5'-diphosphate + ATP = a ribonucleoside 5'-triphosphate + ADP. It functions in the pathway purine metabolism. Functionally, major role in the synthesis of nucleoside triphosphates other than ATP. The ATP gamma phosphate is transferred to the NDP beta phosphate via a ping-pong mechanism, using a phosphorylated active-site intermediate. In terms of biological role, (Microbial infection) Catalyzes the phosphorylation of dZDP to dZTP, when the bacterium is infected by a phage that produces the substrate for the synthesis of dZTP (2- amino-2'-deoxyadenosine 5'-triphosphate), which is then used by the phage as a DNA polymerase substrate. The sequence is that of Nucleoside diphosphate kinase from Synechococcus sp. (strain CC9902).